Consider the following 384-residue polypeptide: Small ribosomal subunit protein mS31 (384 aa).

The N-terminal 54 residues, Met-1–Ser-54, are a transit peptide targeting the mitochondrion. The tract at residues Thr-101–Arg-136 is disordered. The span at Thr-121–Arg-136 shows a compositional bias: basic and acidic residues.

This sequence belongs to the mitochondrion-specific ribosomal protein mS31 family. Component of the mitochondrial ribosome small subunit (28S) which comprises a 12S rRNA and about 30 distinct proteins.

It localises to the mitochondrion. This is Small ribosomal subunit protein mS31 (Mrps31) from Mus musculus (Mouse).